Here is a 295-residue protein sequence, read N- to C-terminus: Glycine--tRNA ligase alpha subunit (295 aa).

It belongs to the class-II aminoacyl-tRNA synthetase family. As to quaternary structure, tetramer of two alpha and two beta subunits.

It localises to the cytoplasm. The catalysed reaction is tRNA(Gly) + glycine + ATP = glycyl-tRNA(Gly) + AMP + diphosphate. The polypeptide is Glycine--tRNA ligase alpha subunit (Bacillus licheniformis (strain ATCC 14580 / DSM 13 / JCM 2505 / CCUG 7422 / NBRC 12200 / NCIMB 9375 / NCTC 10341 / NRRL NRS-1264 / Gibson 46)).